A 343-amino-acid chain; its full sequence is Isopentenyl-diphosphate delta-isomerase (343 aa).

9-10 is a substrate binding site; the sequence is RK. Residues Ser67, 68–70, Ser98, and Asn127 each bind FMN; that span reads AMT. 98–100 lines the substrate pocket; it reads SQR. Residue Gln162 coordinates substrate. Residue Glu163 participates in Mg(2+) binding. FMN is bound by residues Lys194, Thr224, 273–275, and 294–295; these read GVR and AA.

Belongs to the IPP isomerase type 2 family. In terms of assembly, homooctamer. Dimer of tetramers. FMN serves as cofactor. Requires NADPH as cofactor. It depends on Mg(2+) as a cofactor.

The protein localises to the cytoplasm. It carries out the reaction isopentenyl diphosphate = dimethylallyl diphosphate. In terms of biological role, involved in the biosynthesis of isoprenoids. Catalyzes the 1,3-allylic rearrangement of the homoallylic substrate isopentenyl (IPP) to its allylic isomer, dimethylallyl diphosphate (DMAPP). The protein is Isopentenyl-diphosphate delta-isomerase of Xanthobacter autotrophicus (strain ATCC BAA-1158 / Py2).